The primary structure comprises 353 residues: Histidinol-phosphate aminotransferase (353 aa).

An N6-(pyridoxal phosphate)lysine modification is found at lysine 211.

Belongs to the class-II pyridoxal-phosphate-dependent aminotransferase family. Histidinol-phosphate aminotransferase subfamily. As to quaternary structure, homodimer. Pyridoxal 5'-phosphate serves as cofactor.

The catalysed reaction is L-histidinol phosphate + 2-oxoglutarate = 3-(imidazol-4-yl)-2-oxopropyl phosphate + L-glutamate. The protein operates within amino-acid biosynthesis; L-histidine biosynthesis; L-histidine from 5-phospho-alpha-D-ribose 1-diphosphate: step 7/9. This is Histidinol-phosphate aminotransferase from Klebsiella pneumoniae subsp. pneumoniae (strain ATCC 700721 / MGH 78578).